Consider the following 608-residue polypeptide: AAA ATPase forming ring-shaped complexes (608 aa).

Positions 45-79 (AQEYDAVLRRLSAAEATRDNMSRQIRGAGEKNRKL) form a coiled coil. ATP is bound at residue 302-307 (GNGKTM).

Belongs to the AAA ATPase family. In terms of assembly, homohexamer. Assembles into a hexameric ring structure.

In Rothia mucilaginosa (strain DY-18) (Stomatococcus mucilaginosus), this protein is AAA ATPase forming ring-shaped complexes.